Reading from the N-terminus, the 384-residue chain is Deoxyguanosinetriphosphate triphosphohydrolase-like protein (384 aa).

An HD domain is found at 62 to 198 (RLTHSLEVST…AALADDISYI (137 aa)).

Belongs to the dGTPase family. Type 2 subfamily.

This is Deoxyguanosinetriphosphate triphosphohydrolase-like protein from Rickettsia conorii (strain ATCC VR-613 / Malish 7).